The following is a 95-amino-acid chain: Large ribosomal subunit protein uL23 (95 aa).

This sequence belongs to the universal ribosomal protein uL23 family. Part of the 50S ribosomal subunit. Contacts protein L29, and trigger factor when it is bound to the ribosome.

In terms of biological role, one of the early assembly proteins it binds 23S rRNA. One of the proteins that surrounds the polypeptide exit tunnel on the outside of the ribosome. Forms the main docking site for trigger factor binding to the ribosome. This is Large ribosomal subunit protein uL23 from Desulfatibacillum aliphaticivorans.